A 333-amino-acid polypeptide reads, in one-letter code: Threonine-phosphate decarboxylase (333 aa).

At Lys199 the chain carries N6-(pyridoxal phosphate)lysine.

This sequence belongs to the class-I pyridoxal-phosphate-dependent aminotransferase family. Homodimer. Requires pyridoxal 5'-phosphate as cofactor.

The protein localises to the cytoplasm. It catalyses the reaction O-phospho-L-threonine + H(+) = (R)-1-aminopropan-2-yl phosphate + CO2. It functions in the pathway cofactor biosynthesis; adenosylcobalamin biosynthesis. Decarboxylates L-threonine-O-3-phosphate to yield (R)-1-amino-2-propanol O-2-phosphate, the precursor for the linkage between the nucleotide loop and the corrin ring in cobalamin. The sequence is that of Threonine-phosphate decarboxylase (cobC) from Sinorhizobium sp.